The following is a 398-amino-acid chain: Probable aminomethyltransferase (398 aa).

This sequence belongs to the GcvT family. As to quaternary structure, the glycine cleavage system is composed of four proteins: P, T, L and H.

The catalysed reaction is N(6)-[(R)-S(8)-aminomethyldihydrolipoyl]-L-lysyl-[protein] + (6S)-5,6,7,8-tetrahydrofolate = N(6)-[(R)-dihydrolipoyl]-L-lysyl-[protein] + (6R)-5,10-methylene-5,6,7,8-tetrahydrofolate + NH4(+). In terms of biological role, the glycine cleavage system catalyzes the degradation of glycine. The polypeptide is Probable aminomethyltransferase (Thermococcus kodakarensis (strain ATCC BAA-918 / JCM 12380 / KOD1) (Pyrococcus kodakaraensis (strain KOD1))).